We begin with the raw amino-acid sequence, 118 residues long: Ribonuclease P protein component (118 aa).

This sequence belongs to the RnpA family. Consists of a catalytic RNA component (M1 or rnpB) and a protein subunit.

The enzyme catalyses Endonucleolytic cleavage of RNA, removing 5'-extranucleotides from tRNA precursor.. In terms of biological role, RNaseP catalyzes the removal of the 5'-leader sequence from pre-tRNA to produce the mature 5'-terminus. It can also cleave other RNA substrates such as 4.5S RNA. The protein component plays an auxiliary but essential role in vivo by binding to the 5'-leader sequence and broadening the substrate specificity of the ribozyme. The chain is Ribonuclease P protein component from Shewanella amazonensis (strain ATCC BAA-1098 / SB2B).